Here is a 600-residue protein sequence, read N- to C-terminus: UvrABC system protein C (600 aa).

Positions 15 to 92 constitute a GIY-YIG domain; the sequence is EKPGCYLMKD…IKKYQPYYNV (78 aa). In terms of domain architecture, UVR spans 197 to 232; it reads GAVKQDLTQKMEQASEQLEFERAAEIRDQLKYIEET.

Belongs to the UvrC family. As to quaternary structure, interacts with UvrB in an incision complex.

It is found in the cytoplasm. In terms of biological role, the UvrABC repair system catalyzes the recognition and processing of DNA lesions. UvrC both incises the 5' and 3' sides of the lesion. The N-terminal half is responsible for the 3' incision and the C-terminal half is responsible for the 5' incision. The polypeptide is UvrABC system protein C (Lactobacillus helveticus (strain DPC 4571)).